Here is a 211-residue protein sequence, read N- to C-terminus: uncharacterized protein (211 aa).

Residues 1 to 33 (MQNGTEDKSNIPARSNDDVLPPLAVRLTMKVMR) lie on the Cytoplasmic side of the membrane. The helical transmembrane segment at 34–54 (LIFIGKMFAYSFVPFPPFKLL) threads the bilayer. Residues 55–58 (TFDN) are Lumenal-facing. Residues 59 to 79 (TVGWFVAYSAIVSIWGFAVWM) form a helical membrane-spanning segment. Over 80–116 (ERGYRHKINLLPPRCTKIRCSRCNTRIRSPNWFKYKN) the chain is Cytoplasmic. Residues 117–137 (WLYFFLLYVSLTTSNLIIQLA) traverse the membrane as a helical segment. The Lumenal portion of the chain corresponds to 138-162 (SFMTEMSRRGISVPGTKDPGKRDYL). A helical transmembrane segment spans residues 163-183 (GLIIPMRFIGAFIHYMTANLF). Residues 184 to 211 (KEYYLHNGPLEKNDRPSTDEKTSENETL) lie on the Cytoplasmic side of the membrane.

It is found in the endoplasmic reticulum membrane. This is an uncharacterized protein from Saccharomyces cerevisiae (strain ATCC 204508 / S288c) (Baker's yeast).